Here is a 145-residue protein sequence, read N- to C-terminus: Basic phospholipase A2 PC16 (145 aa).

The first 21 residues, 1–21 (MYPAHLLLLLAVCVSLLGASA), serve as a signal peptide directing secretion. A propeptide spanning residues 22 to 27 (IPPLPL) is cleaved from the precursor. Disulfide bonds link Cys38-Cys98, Cys54-Cys144, Cys56-Cys72, Cys71-Cys125, Cys78-Cys118, Cys87-Cys111, and Cys105-Cys116. Positions 55, 57, and 59 each coordinate Ca(2+). Residue His75 is part of the active site. Asp76 is a binding site for Ca(2+). The active site involves Asp119.

This sequence belongs to the phospholipase A2 family. Group I subfamily. D49 sub-subfamily. The cofactor is Ca(2+).

The protein resides in the secreted. The catalysed reaction is a 1,2-diacyl-sn-glycero-3-phosphocholine + H2O = a 1-acyl-sn-glycero-3-phosphocholine + a fatty acid + H(+). In terms of biological role, PLA2 catalyzes the calcium-dependent hydrolysis of the 2-acyl groups in 3-sn-phosphoglycerides. This Laticauda laticaudata (Blue-ringed sea krait) protein is Basic phospholipase A2 PC16.